Reading from the N-terminus, the 110-residue chain is Cytochrome subunit of sulfide dehydrogenase (110 aa).

The signal sequence occupies residues 1-16; the sequence is MLAAAPLLLASGNGFA. 4 residues coordinate heme c: Cys41, Cys44, His45, and Met83.

Dimer of one cytochrome and one flavoprotein. Binds 1 heme c group covalently per subunit.

The protein localises to the periplasm. Its function is as follows. Monoheme cytochrome that function as the electron transport subunit of sulfide dehydrogenase. The chain is Cytochrome subunit of sulfide dehydrogenase (fccA) from Chlorobaculum tepidum (strain ATCC 49652 / DSM 12025 / NBRC 103806 / TLS) (Chlorobium tepidum).